The chain runs to 368 residues: Quinolinate synthase (368 aa).

Iminosuccinate-binding residues include His-46 and Ser-63. Cys-110 provides a ligand contact to [4Fe-4S] cluster. Iminosuccinate-binding positions include 141 to 143 (YVN) and Ser-162. Cys-230 serves as a coordination point for [4Fe-4S] cluster. Residues 256–258 (HPE) and Thr-273 each bind iminosuccinate. Cys-320 serves as a coordination point for [4Fe-4S] cluster.

It belongs to the quinolinate synthase family. Type 3 subfamily. The cofactor is [4Fe-4S] cluster.

It is found in the cytoplasm. The enzyme catalyses iminosuccinate + dihydroxyacetone phosphate = quinolinate + phosphate + 2 H2O + H(+). It functions in the pathway cofactor biosynthesis; NAD(+) biosynthesis; quinolinate from iminoaspartate: step 1/1. Catalyzes the condensation of iminoaspartate with dihydroxyacetone phosphate to form quinolinate. The polypeptide is Quinolinate synthase (Bacillus anthracis (strain A0248)).